We begin with the raw amino-acid sequence, 451 residues long: Ubiquitin hydrolase B (451 aa).

Residues 19-450 (RGLINTSNTC…EAYLLLYQLV (432 aa)) enclose the USP domain. Positions 83–115 (NNSNSTTTTSSSSTTATTTSTSNNNKSQTPTSP) are enriched in low complexity. The tract at residues 83–154 (NNSNSTTTTS…PPINPKHFND (72 aa)) is disordered. A compositionally biased stretch (polar residues) spans 116-135 (IQQHHQSQTNGLSNQPSVAT). His399 functions as the Nucleophile in the catalytic mechanism. His408 (proton acceptor) is an active-site residue.

The protein belongs to the peptidase C19 family. As to quaternary structure, interacts with mkkA (via F-box/WD40 domains).

It catalyses the reaction Thiol-dependent hydrolysis of ester, thioester, amide, peptide and isopeptide bonds formed by the C-terminal Gly of ubiquitin (a 76-residue protein attached to proteins as an intracellular targeting signal).. Functionally, required for proper prespore cell patterning. Plays a role in stabilizing mkkA by preventing it from being targeted for degradation. ubcB and ubpB differentially control ubiquitination/deubiquitination and degradation of mkkA in a cell-type-specific and temporally regulated manner. This is Ubiquitin hydrolase B (ubpB) from Dictyostelium discoideum (Social amoeba).